The sequence spans 251 residues: Octanoyltransferase (251 aa).

In terms of domain architecture, BPL/LPL catalytic spans Ala56 to Asp241. Residues Arg96–His103, Ala168–Gly170, and Gly181–Ser183 each bind substrate. The Acyl-thioester intermediate role is filled by Cys199.

Belongs to the LipB family.

It localises to the cytoplasm. The catalysed reaction is octanoyl-[ACP] + L-lysyl-[protein] = N(6)-octanoyl-L-lysyl-[protein] + holo-[ACP] + H(+). It participates in protein modification; protein lipoylation via endogenous pathway; protein N(6)-(lipoyl)lysine from octanoyl-[acyl-carrier-protein]: step 1/2. Its function is as follows. Catalyzes the transfer of endogenously produced octanoic acid from octanoyl-acyl-carrier-protein onto the lipoyl domains of lipoate-dependent enzymes. Lipoyl-ACP can also act as a substrate although octanoyl-ACP is likely to be the physiological substrate. The protein is Octanoyltransferase of Burkholderia cenocepacia (strain HI2424).